Consider the following 55-residue polypeptide: Probable Rubredoxin-2 (55 aa).

Residues 4-54 enclose the Rubredoxin-like domain; that stretch reads MARYQCMCGWVYDEDKGEPSQNIPPGTKFEDLPDTFRCPQCGLGKNAFRKI. Residues Cys-9, Cys-11, Cys-41, and Cys-44 each coordinate Fe cation.

It belongs to the rubredoxin family. It depends on Fe(3+) as a cofactor.

In terms of biological role, rubredoxin is a small nonheme, iron protein lacking acid-labile sulfide. Its single Fe, chelated to 4 Cys, functions as an electron acceptor and may also stabilize the conformation of the molecule. This chain is Probable Rubredoxin-2, found in Methanocaldococcus jannaschii (strain ATCC 43067 / DSM 2661 / JAL-1 / JCM 10045 / NBRC 100440) (Methanococcus jannaschii).